We begin with the raw amino-acid sequence, 202 residues long: Transmembrane 4 L6 family member 1 (202 aa).

At 1–9 the chain is on the cytoplasmic side; sequence MCSSKCTRY. Residues 10 to 30 traverse the membrane as a helical segment; it reads IGHSLVVFAVLCIVANILLYF. At 31 to 49 the chain is on the extracellular side; it reads PNGETKYAYEDHLSRFVWF. A helical transmembrane segment spans residues 50–70; sequence FAGIVGGGLLILLPAFVFLGL. Over 71–93 the chain is Cytoplasmic; the sequence is EGEDCCGCWSCENYGKRCTMLSS. A helical membrane pass occupies residues 94–114; sequence IMAALIGIAGSGYCVIVAALG. At 115 to 161 the chain is on the extracellular side; sequence LAEGPKCGDSHGMWNYTFANTDGQYLLDPTTWSKCHEPNNIVEWNVT. N-linked (GlcNAc...) asparagine glycosylation is found at asparagine 129 and asparagine 159. A helical transmembrane segment spans residues 162–182; it reads LFSILLALGGLEFILCLIQVI. The Cytoplasmic segment spans residues 183–202; that stretch reads NGVLEGMCSYCCSHQQQYDC.

Belongs to the L6 tetraspanin family. Present in high molecular weight complexes in tumor cells. Interacts with SDCBP2.

The protein resides in the membrane. The polypeptide is Transmembrane 4 L6 family member 1 (TM4SF1) (Mesocricetus auratus (Golden hamster)).